A 103-amino-acid polypeptide reads, in one-letter code: MATQNIRIRLKAFDHRLIDQSAREITETAKRTGAQVKGPIPMPTRKERFTVLVSPHVNKDARDQYEIRTHKRLLDIVDPTDKTVDALMKLDLAAGVDVQLELR.

It belongs to the universal ribosomal protein uS10 family. Part of the 30S ribosomal subunit.

Functionally, involved in the binding of tRNA to the ribosomes. The chain is Small ribosomal subunit protein uS10 from Hydrogenovibrio crunogenus (strain DSM 25203 / XCL-2) (Thiomicrospira crunogena).